Consider the following 431-residue polypeptide: Histidinol dehydrogenase (431 aa).

NAD(+) contacts are provided by Tyr127, Gln190, and Asn213. Substrate contacts are provided by Ser238, Gln260, and His263. Residues Gln260 and His263 each coordinate Zn(2+). Residues Glu329 and His330 each act as proton acceptor in the active site. The substrate site is built by His330, Asp363, Glu417, and His422. Asp363 is a Zn(2+) binding site. His422 serves as a coordination point for Zn(2+).

This sequence belongs to the histidinol dehydrogenase family. The cofactor is Zn(2+).

The enzyme catalyses L-histidinol + 2 NAD(+) + H2O = L-histidine + 2 NADH + 3 H(+). It functions in the pathway amino-acid biosynthesis; L-histidine biosynthesis; L-histidine from 5-phospho-alpha-D-ribose 1-diphosphate: step 9/9. Its function is as follows. Catalyzes the sequential NAD-dependent oxidations of L-histidinol to L-histidinaldehyde and then to L-histidine. The polypeptide is Histidinol dehydrogenase (Methanopyrus kandleri (strain AV19 / DSM 6324 / JCM 9639 / NBRC 100938)).